The chain runs to 379 residues: Cobalt-precorrin-5B C(1)-methyltransferase (379 aa).

The protein belongs to the CbiD family.

It catalyses the reaction Co-precorrin-5B + S-adenosyl-L-methionine = Co-precorrin-6A + S-adenosyl-L-homocysteine. It participates in cofactor biosynthesis; adenosylcobalamin biosynthesis; cob(II)yrinate a,c-diamide from sirohydrochlorin (anaerobic route): step 6/10. In terms of biological role, catalyzes the methylation of C-1 in cobalt-precorrin-5B to form cobalt-precorrin-6A. This chain is Cobalt-precorrin-5B C(1)-methyltransferase, found in Klebsiella pneumoniae subsp. pneumoniae (strain ATCC 700721 / MGH 78578).